A 142-amino-acid chain; its full sequence is Large ribosomal subunit protein uL13 (142 aa).

Belongs to the universal ribosomal protein uL13 family. As to quaternary structure, part of the 50S ribosomal subunit.

This protein is one of the early assembly proteins of the 50S ribosomal subunit, although it is not seen to bind rRNA by itself. It is important during the early stages of 50S assembly. This chain is Large ribosomal subunit protein uL13, found in Geobacter sp. (strain M21).